The primary structure comprises 506 residues: Maturase K (506 aa).

Belongs to the intron maturase 2 family. MatK subfamily.

It is found in the plastid. The protein localises to the chloroplast. Its function is as follows. Usually encoded in the trnK tRNA gene intron. Probably assists in splicing its own and other chloroplast group II introns. The polypeptide is Maturase K (Rhododendron tsusiophyllum (Rhododendron)).